The chain runs to 1073 residues: ATP-dependent helicase/deoxyribonuclease subunit B (1073 aa).

Belongs to the helicase family. AddB/RexB type 2 subfamily. In terms of assembly, heterodimer of AddA and RexB. Mg(2+) is required as a cofactor.

Functionally, the heterodimer acts as both an ATP-dependent DNA helicase and an ATP-dependent, dual-direction single-stranded exonuclease. Recognizes the chi site generating a DNA molecule suitable for the initiation of homologous recombination. This subunit has 5' -&gt; 3' nuclease activity but not helicase activity. In Streptococcus equi subsp. zooepidemicus (strain H70), this protein is ATP-dependent helicase/deoxyribonuclease subunit B.